Reading from the N-terminus, the 437-residue chain is GTPase Obg (437 aa).

Residues 2-160 (SLFLDTARIE…KILLLELRVL (159 aa)) enclose the Obg domain. Residues 161 to 338 (ADVGLVGFPS…LLARTSELLA (178 aa)) form the OBG-type G domain. GTP-binding positions include 167–174 (GFPSVGKS), 192–196 (FTTIT), 214–217 (DMPG), 284–287 (NKMD), and 319–321 (SGL). Residues Ser-174 and Thr-194 each coordinate Mg(2+). One can recognise an OCT domain in the interval 359 to 437 (GFEDEEKPFK…IQKFEFEFVD (79 aa)).

The protein belongs to the TRAFAC class OBG-HflX-like GTPase superfamily. OBG GTPase family. Monomer. It depends on Mg(2+) as a cofactor.

The protein localises to the cytoplasm. An essential GTPase which binds GTP, GDP and possibly (p)ppGpp with moderate affinity, with high nucleotide exchange rates and a fairly low GTP hydrolysis rate. Plays a role in control of the cell cycle, stress response, ribosome biogenesis and in those bacteria that undergo differentiation, in morphogenesis control. The sequence is that of GTPase Obg from Lactococcus lactis subsp. cremoris (strain SK11).